We begin with the raw amino-acid sequence, 142 residues long: Mediator of RNA polymerase II transcription subunit 9 (142 aa).

The interval 1 to 58 (MASSGVAGGRQAEDTLQPPPELLPESKPPPPPQPLPVAALPPPAAPRPQSPAGAKEEN) is disordered. N-acetylalanine is present on Ala2. The segment covering 17 to 49 (QPPPELLPESKPPPPPQPLPVAALPPPAAPRPQ) has biased composition (pro residues). The stretch at 78–134 (DLHQDLNALKTKFQELRKLIGTMPGIHVSPEQQQQQLHSLREQVRTKNELLQKYKSL) forms a coiled coil. At Ser106 the chain carries Phosphoserine.

This sequence belongs to the Mediator complex subunit 9 family. In terms of assembly, component of the Mediator complex, which is composed of MED1, MED4, MED6, MED7, MED8, MED9, MED10, MED11, MED12, MED13, MED13L, MED14, MED15, MED16, MED17, MED18, MED19, MED20, MED21, MED22, MED23, MED24, MED25, MED26, MED27, MED29, MED30, MED31, CCNC, CDK8 and CDC2L6/CDK11. The MED12, MED13, CCNC and CDK8 subunits form a distinct module termed the CDK8 module. Mediator containing the CDK8 module is less active than Mediator lacking this module in supporting transcriptional activation. Individual preparations of the Mediator complex lacking one or more distinct subunits have been variously termed ARC, CRSP, DRIP, PC2, SMCC and TRAP.

It is found in the nucleus. Component of the Mediator complex, a coactivator involved in the regulated transcription of nearly all RNA polymerase II-dependent genes. Mediator functions as a bridge to convey information from gene-specific regulatory proteins to the basal RNA polymerase II transcription machinery. Mediator is recruited to promoters by direct interactions with regulatory proteins and serves as a scaffold for the assembly of a functional preinitiation complex with RNA polymerase II and the general transcription factors. In Mus musculus (Mouse), this protein is Mediator of RNA polymerase II transcription subunit 9 (Med9).